The primary structure comprises 523 residues: 2-isopropylmalate synthase (523 aa).

One can recognise a Pyruvate carboxyltransferase domain in the interval 5-267 (VIIFDTTLRD…HTNINHHEIW (263 aa)). Mn(2+) contacts are provided by Asp-14, His-202, His-204, and Asn-238. The regulatory domain stretch occupies residues 392-523 (RLDYFSVQSG…HNKENNKEIV (132 aa)).

It belongs to the alpha-IPM synthase/homocitrate synthase family. LeuA type 1 subfamily. Homodimer. Requires Mn(2+) as cofactor.

It localises to the cytoplasm. The enzyme catalyses 3-methyl-2-oxobutanoate + acetyl-CoA + H2O = (2S)-2-isopropylmalate + CoA + H(+). Its pathway is amino-acid biosynthesis; L-leucine biosynthesis; L-leucine from 3-methyl-2-oxobutanoate: step 1/4. Functionally, catalyzes the condensation of the acetyl group of acetyl-CoA with 3-methyl-2-oxobutanoate (2-ketoisovalerate) to form 3-carboxy-3-hydroxy-4-methylpentanoate (2-isopropylmalate). This is 2-isopropylmalate synthase from Salmonella arizonae (strain ATCC BAA-731 / CDC346-86 / RSK2980).